The primary structure comprises 262 residues: Putative hydro-lyase Mflv_5194 (262 aa).

This sequence belongs to the D-glutamate cyclase family.

This Mycolicibacterium gilvum (strain PYR-GCK) (Mycobacterium gilvum (strain PYR-GCK)) protein is Putative hydro-lyase Mflv_5194.